The chain runs to 700 residues: Elongation factor G 2 (700 aa).

The region spanning 8–290 (ERYRNIGISA…AVVDYLPSPI (283 aa)) is the tr-type G domain. Residues 17 to 24 (AHIDAGKT), 88 to 92 (DTPGH), and 142 to 145 (NKMD) contribute to the GTP site.

Belongs to the TRAFAC class translation factor GTPase superfamily. Classic translation factor GTPase family. EF-G/EF-2 subfamily.

The protein localises to the cytoplasm. Functionally, catalyzes the GTP-dependent ribosomal translocation step during translation elongation. During this step, the ribosome changes from the pre-translocational (PRE) to the post-translocational (POST) state as the newly formed A-site-bound peptidyl-tRNA and P-site-bound deacylated tRNA move to the P and E sites, respectively. Catalyzes the coordinated movement of the two tRNA molecules, the mRNA and conformational changes in the ribosome. The chain is Elongation factor G 2 (fusB) from Ralstonia nicotianae (strain ATCC BAA-1114 / GMI1000) (Ralstonia solanacearum).